We begin with the raw amino-acid sequence, 429 residues long: MSAKLFRLDAGYQQYDWGKIGSSSAVAQYAANSDPSVQIEEDKPYAELWMGTHHKVPSRHHDTKVALSDLIAANPEGMLGSGNVEKFHSRKDLPFLFKVLSIEKVLSIQAHPDKNLGRRLHIQDPKNYPDDNHKPEMAIAISDFEGFCGFKPLEELAEELQRIPEFRSLVGEDIAAQFCAGIKVGAQEGSEEDKSNRKLLQSVFSNVMNASDDVIASHARHLVERAKQSPADFNNETLPALILRLNEQFPEDVGLFCGCLMLNHCVLKAGESIFLRAKDPHAYITGDIIECMAASDNVVRAGFTPKFKDVKNLVEMLTYSYDSVEDQKMKLLPFARSSGSGDSILYNPPIEEFAVLQTNFHGSTGTHHFDGLDGPSIVITTNGSGYIQSGDVRLKAEAGYVFFIAPHAEVDLQTEDSNFTTYRAFVEPN.

The Zn(2+) site is built by Gln109, His111, Glu136, and His281. Residue Arg300 is part of the active site.

This sequence belongs to the mannose-6-phosphate isomerase type 1 family. It depends on Zn(2+) as a cofactor.

It localises to the cytoplasm. It catalyses the reaction D-mannose 6-phosphate = D-fructose 6-phosphate. The protein operates within nucleotide-sugar biosynthesis; GDP-alpha-D-mannose biosynthesis; alpha-D-mannose 1-phosphate from D-fructose 6-phosphate: step 1/2. Involved in the synthesis of the GDP-mannose and dolichol-phosphate-mannose required for a number of critical mannosyl transfer reactions. This Eremothecium gossypii (strain ATCC 10895 / CBS 109.51 / FGSC 9923 / NRRL Y-1056) (Yeast) protein is Mannose-6-phosphate isomerase (PMI1).